A 176-amino-acid chain; its full sequence is Interleukin-7 (176 aa).

An N-terminal signal peptide occupies residues 1-25; it reads MFHVSFRYIFGIPPLILVLLPVASS. 3 disulfides stabilise this stretch: Cys27–Cys165, Cys58–Cys153, and Cys71–Cys116. 3 N-linked (GlcNAc...) asparagine glycosylation sites follow: Asn94, Asn115, and Asn140.

The protein belongs to the IL-7/IL-9 family.

The protein localises to the secreted. Functionally, hematopoietic growth factor capable of stimulating the proliferation of lymphoid progenitors. It is important for proliferation during certain stages of B-cell maturation. The chain is Interleukin-7 (IL7) from Sus scrofa (Pig).